Reading from the N-terminus, the 195-residue chain is Large ribosomal subunit protein bL25 (195 aa).

This sequence belongs to the bacterial ribosomal protein bL25 family. CTC subfamily. As to quaternary structure, part of the 50S ribosomal subunit; part of the 5S rRNA/L5/L18/L25 subcomplex. Contacts the 5S rRNA. Binds to the 5S rRNA independently of L5 and L18.

In terms of biological role, this is one of the proteins that binds to the 5S RNA in the ribosome where it forms part of the central protuberance. This chain is Large ribosomal subunit protein bL25, found in Chlorobium chlorochromatii (strain CaD3).